The primary structure comprises 426 residues: Glutamate-1-semialdehyde 2,1-aminomutase (426 aa).

Lys-265 is modified (N6-(pyridoxal phosphate)lysine).

It belongs to the class-III pyridoxal-phosphate-dependent aminotransferase family. HemL subfamily. In terms of assembly, homodimer. It depends on pyridoxal 5'-phosphate as a cofactor.

It is found in the cytoplasm. The enzyme catalyses (S)-4-amino-5-oxopentanoate = 5-aminolevulinate. It functions in the pathway porphyrin-containing compound metabolism; protoporphyrin-IX biosynthesis; 5-aminolevulinate from L-glutamyl-tRNA(Glu): step 2/2. The polypeptide is Glutamate-1-semialdehyde 2,1-aminomutase (Salmonella newport (strain SL254)).